The primary structure comprises 292 residues: Protoheme IX farnesyltransferase (292 aa).

Helical transmembrane passes span 12-32 (ITWLILMSTGIGYFFGLPQAS), 43-63 (LLRLLHTIIGTGLIASGTAAL), 94-114 (LAFGVALSIAGFVELWLGVNL), 115-135 (LSAGIGAFTLASYLFLYTPMK), 144-164 (VGAIPGAMPPVIGFAAAAGGL), 169-189 (WVLFAILFLWQFPHFYSIAWM), 216-236 (IVIYGIALIPVSLVPALLGMS), 239-259 (LYLVGALLLGLWFLYSGVRVA), and 267-287 (ARGVLITSVLYLPLIYGLMLL).

It belongs to the UbiA prenyltransferase family. Protoheme IX farnesyltransferase subfamily.

It is found in the cell inner membrane. It catalyses the reaction heme b + (2E,6E)-farnesyl diphosphate + H2O = Fe(II)-heme o + diphosphate. It participates in porphyrin-containing compound metabolism; heme O biosynthesis; heme O from protoheme: step 1/1. Functionally, converts heme B (protoheme IX) to heme O by substitution of the vinyl group on carbon 2 of heme B porphyrin ring with a hydroxyethyl farnesyl side group. The sequence is that of Protoheme IX farnesyltransferase from Solibacter usitatus (strain Ellin6076).